The following is a 387-amino-acid chain: Phosphoglycerate kinase (387 aa).

Residues 21 to 23 (DLN), Arg-36, 59 to 62 (HLGR), Arg-113, and Arg-146 each bind substrate. ATP is bound by residues Lys-197, Glu-314, and 340–343 (GGDT).

Belongs to the phosphoglycerate kinase family. In terms of assembly, monomer.

It localises to the cytoplasm. The enzyme catalyses (2R)-3-phosphoglycerate + ATP = (2R)-3-phospho-glyceroyl phosphate + ADP. It functions in the pathway carbohydrate degradation; glycolysis; pyruvate from D-glyceraldehyde 3-phosphate: step 2/5. This Cronobacter sakazakii (strain ATCC BAA-894) (Enterobacter sakazakii) protein is Phosphoglycerate kinase.